A 27-amino-acid chain; its full sequence is Secretin (27 aa).

Val27 carries the valine amide modification.

It belongs to the glucagon family.

The protein resides in the secreted. Functionally, hormone involved in different processes, such as regulation of the pH of the duodenal content, food intake and water homeostasis. Exerts its biological effects by binding to secretin receptor (SCTR), a G-protein coupled receptor expressed in the basolateral domain of several cells. Acts as a key gastrointestinal hormone by regulating the pH of the duodenal content. Secreted by S cells of the duodenum in the crypts of Lieberkuehn and regulates the pH of the duodenum by (1) inhibiting the secretion of gastric acid from the parietal cells of the stomach and (2) stimulating the production of bicarbonate (NaHCO(3)) from the ductal cells of the pancreas. Production of bicarbonate is essential to neutralize the pH and ensure no damage is done to the small intestine by the gastric acid. In addition to regulating the pH of the duodenal content, plays a central role in diet induced thermogenesis: acts as a non-sympathetic brown fat (BAT) activator mediating prandial thermogenesis, which consequentially induces satiation. Mechanistically, secretin released by the gut after a meal binds to secretin receptor (SCTR) in brown adipocytes, activating brown fat thermogenesis by stimulating lipolysis, which is sensed in the brain and promotes satiation. Also able to stimulate lipolysis in white adipocytes. Also plays an important role in cellular osmoregulation: released into the systemic circulation in response to hyperosmolality and acts at different levels in the hypothalamus, pituitary and kidney to regulate water homeostasis. Also plays a role in the central nervous system, possibly by acting as a neuropeptide hormone: required for hippocampal synaptic function and neural progenitor cells maintenance. The polypeptide is Secretin (Canis lupus familiaris (Dog)).